Reading from the N-terminus, the 122-residue chain is Acidic phospholipase A2 Tpu-E6c (122 aa).

7 cysteine pairs are disulfide-bonded: Cys26–Cys115, Cys28–Cys44, Cys43–Cys95, Cys49–Cys122, Cys50–Cys88, Cys57–Cys81, and Cys75–Cys86. Ca(2+)-binding residues include Tyr27, Gly29, and Gly31. His47 is a catalytic residue. Asp48 provides a ligand contact to Ca(2+). Asp89 is an active-site residue.

In terms of assembly, monomer. It depends on Ca(2+) as a cofactor. Expressed by the venom gland.

Its subcellular location is the secreted. The catalysed reaction is a 1,2-diacyl-sn-glycero-3-phosphocholine + H2O = a 1-acyl-sn-glycero-3-phosphocholine + a fatty acid + H(+). Its function is as follows. Snake venom phospholipase A2 (PLA2) that impairs hemostasis. It weakly inhibits ADP-induced platelet aggregation when tested on platelet rich plasma from human and rabbit blood (15-25% of inhibition at 5-10 ug of enzyme), and dose-dependently inhibits blood coagulation, possibly by inhibiting thrombin activation. Exhibits high hydrolytic activities toward L-dipalmitoyl phosphatidylcholine. PLA2 catalyzes the calcium-dependent hydrolysis of the 2-acyl groups in 3-sn-phosphoglycerides. The sequence is that of Acidic phospholipase A2 Tpu-E6c from Craspedocephalus puniceus (Flat-nosed pitviper).